A 607-amino-acid polypeptide reads, in one-letter code: Bifunctional lysine-specific demethylase and histidyl-hydroxylase NO66 (607 aa).

2 disordered regions span residues 23–121 (GPTI…IKTN) and 139–184 (ATQH…GEVE). A compositionally biased stretch (polar residues) spans 25–37 (TIQQTGATKTPKT). The span at 39–58 (SKIRRLSIRKSTRKIKHALK) shows a compositional bias: basic residues. Basic and acidic residues predominate over residues 156 to 167 (DKTPVKRVRSDT). The region spanning 188–405 (EEAEKMFEWL…DLMEKLVPAA (218 aa)) is the JmjC domain. H328, D330, and H371 together coordinate Fe cation.

Belongs to the ROX family. NO66 subfamily. It depends on Fe(2+) as a cofactor.

Its subcellular location is the nucleus. The catalysed reaction is L-histidyl-[protein] + 2-oxoglutarate + O2 = (3S)-3-hydroxy-L-histidyl-[protein] + succinate + CO2. The enzyme catalyses N(6),N(6)-dimethyl-L-lysyl(36)-[histone H3] + 2 2-oxoglutarate + 2 O2 = L-lysyl(36)-[histone H3] + 2 formaldehyde + 2 succinate + 2 CO2. Functionally, oxygenase that can act as both a histone lysine demethylase and a ribosomal histidine hydroxylase. Specifically demethylates 'Lys-4' (H3K4me) and 'Lys-36' (H3K36me) of histone H3, thereby playing a central role in histone code. Also catalyzes the hydroxylation of 60S ribosomal protein L8. In Branchiostoma floridae (Florida lancelet), this protein is Bifunctional lysine-specific demethylase and histidyl-hydroxylase NO66.